A 392-amino-acid chain; its full sequence is Nucleosome assembly protein 1-like 1-A (392 aa).

The disordered stretch occupies residues 1 to 37 (MANIDNKGQTELDQQDMEDVEDVEEEETGEDANSKAR). Over residues 13–30 (DQQDMEDVEDVEEEETGE) the composition is skewed to acidic residues. The NAP1L motif motif lies at 126–150 (YEPTEEECEWKVEEEDISGDLKEKA). Positions 273 to 279 (IKKKQKH) match the Nuclear localization signal motif. Residues 346–377 (AIEDDDDDYDEEGEEADDEEGEEEADEDNDPD) show a composition bias toward acidic residues. The interval 346–392 (AIEDDDDDYDEEGEEADDEEGEEEADEDNDPDYEPKKGQNPAECKQQ) is disordered.

The protein belongs to the nucleosome assembly protein (NAP) family. Forms homomultimers. Interacts with histone B4. Interacts with the B-type cyclins ccnb1 and ccnb2. In terms of processing, phosphorylated by cyclin B-cdc2 kinase complexes. As to expression, initially expressed throughout the embryo with expression higher at the animal pole. Becomes localized to presumptive ectoderm by gastrula stages. By stage 18 (neurula), expressed in the neural plate and posterior to the cement gland. In late neurula/early tailbud stages, expressed in the neural crest, neural tube, eyes, tailbud and ventral blood islands. Adult expression is predominantly in ovaries.

Its subcellular location is the cytoplasm. The protein resides in the nucleus. In terms of biological role, acts as a chaperone for the linker histone to facilitate deposition of histone B4 onto linker DNA. Required for both remodeling of sperm chromatin into nucleosomes, and linker histone binding to nucleosome core dimers. Plays a role in tissue-specific gene regulation. Required for primitive hemopoiesis, acting upstream of tal1/scl. The polypeptide is Nucleosome assembly protein 1-like 1-A (nap1l1-a) (Xenopus laevis (African clawed frog)).